The sequence spans 208 residues: MVLDELISEFDRGLRSLTGISRMSRPVPVPAQPPAAELTPAERTHAAGLMRVNHVGEVCAQALYQAQKFTARTASAKATFEEAAREEEDHLAWTAHRLKELDSRPSLLNPLWYAGALAIGVAAGTLGDKVSLGFMAETERQVENHLEGHLSELPAADTASRAIVDQMRIDEVKHGKAATDAGGVELPLPARMLMRAASKVMTSTAYYL.

Residues Glu-57, Glu-87, His-90, Glu-139, Glu-171, and His-174 each coordinate Fe cation.

This sequence belongs to the COQ7 family. The cofactor is Fe cation.

It localises to the cell membrane. It carries out the reaction a 5-methoxy-2-methyl-3-(all-trans-polyprenyl)benzene-1,4-diol + AH2 + O2 = a 3-demethylubiquinol + A + H2O. It functions in the pathway cofactor biosynthesis; ubiquinone biosynthesis. Catalyzes the hydroxylation of 2-nonaprenyl-3-methyl-6-methoxy-1,4-benzoquinol during ubiquinone biosynthesis. This chain is 3-demethoxyubiquinol 3-hydroxylase, found in Burkholderia vietnamiensis (strain G4 / LMG 22486) (Burkholderia cepacia (strain R1808)).